A 109-amino-acid chain; its full sequence is Small ribosomal subunit protein bS6 (109 aa).

It belongs to the bacterial ribosomal protein bS6 family.

Functionally, binds together with bS18 to 16S ribosomal RNA. In Dehalococcoides mccartyi (strain CBDB1), this protein is Small ribosomal subunit protein bS6.